The following is a 474-amino-acid chain: Probable glycine dehydrogenase (decarboxylating) subunit 2 (474 aa).

An N6-(pyridoxal phosphate)lysine modification is found at K262.

Belongs to the GcvP family. C-terminal subunit subfamily. In terms of assembly, the glycine cleavage system is composed of four proteins: P, T, L and H. In this organism, the P 'protein' is a heterodimer of two subunits. Pyridoxal 5'-phosphate serves as cofactor.

The catalysed reaction is N(6)-[(R)-lipoyl]-L-lysyl-[glycine-cleavage complex H protein] + glycine + H(+) = N(6)-[(R)-S(8)-aminomethyldihydrolipoyl]-L-lysyl-[glycine-cleavage complex H protein] + CO2. The glycine cleavage system catalyzes the degradation of glycine. The P protein binds the alpha-amino group of glycine through its pyridoxal phosphate cofactor; CO(2) is released and the remaining methylamine moiety is then transferred to the lipoamide cofactor of the H protein. This Thermotoga maritima (strain ATCC 43589 / DSM 3109 / JCM 10099 / NBRC 100826 / MSB8) protein is Probable glycine dehydrogenase (decarboxylating) subunit 2.